The chain runs to 600 residues: Methionine--tRNA ligase (600 aa).

Positions 12–22 (PYANGPRHIGH) match the 'HIGH' region motif. Residues cysteine 144, cysteine 147, cysteine 157, and cysteine 160 each coordinate Zn(2+). Positions 351–355 (KFSSS) match the 'KMSKS' region motif. Serine 354 contacts ATP.

Belongs to the class-I aminoacyl-tRNA synthetase family. MetG type 1 subfamily. As to quaternary structure, monomer. Requires Zn(2+) as cofactor.

The protein localises to the cytoplasm. It catalyses the reaction tRNA(Met) + L-methionine + ATP = L-methionyl-tRNA(Met) + AMP + diphosphate. Its function is as follows. Is required not only for elongation of protein synthesis but also for the initiation of all mRNA translation through initiator tRNA(fMet) aminoacylation. In Chloroflexus aggregans (strain MD-66 / DSM 9485), this protein is Methionine--tRNA ligase.